Reading from the N-terminus, the 311-residue chain is Cell division control protein 2 homolog 3 (311 aa).

A Protein kinase domain is found at 23–306; the sequence is YNRMDILGEG…AKAALQHPWF (284 aa). ATP is bound by residues 29-37 and Lys52; that span reads LGEGTYGVV. The residue at position 33 (Thr33) is a Phosphothreonine. The residue at position 34 (Tyr34) is a Phosphotyrosine. The active-site Proton acceptor is the Asp145.

This sequence belongs to the protein kinase superfamily. CMGC Ser/Thr protein kinase family. CDC2/CDKX subfamily. Forms a stable but non-covalent complex with a regulatory subunit and with a cyclin.

It carries out the reaction L-seryl-[protein] + ATP = O-phospho-L-seryl-[protein] + ADP + H(+). The enzyme catalyses L-threonyl-[protein] + ATP = O-phospho-L-threonyl-[protein] + ADP + H(+). With respect to regulation, phosphorylation at Thr-33 or Tyr-34 inactivates the enzyme. Functionally, probably involved in the control of the cell cycle. This Trypanosoma brucei brucei protein is Cell division control protein 2 homolog 3 (CRK3).